The chain runs to 496 residues: Legumin (496 aa).

A signal peptide spans Met1 to Ala21. Disulfide bonds link Cys31–Cys64 and Cys107–Cys318. Positions Leu36–Asn230 constitute a Cupin type-1 1 domain. A disordered region spans residues Glu240–Asn311. The span at Pro257–Gln269 shows a compositional bias: basic and acidic residues. The 130-residue stretch at Gln324–Gln453 folds into the Cupin type-1 2 domain.

The protein belongs to the 11S seed storage protein (globulins) family. Hexamer; each subunit is composed of an acidic and a basic chain derived from a single precursor and linked by a disulfide bond.

Seed storage protein. Alpha-amylase inhibitor. The protein is Legumin of Cicer arietinum (Chickpea).